Here is a 62-residue protein sequence, read N- to C-terminus: Large ribosomal subunit protein uL15 (62 aa).

Belongs to the universal ribosomal protein uL15 family.

The sequence is that of Large ribosomal subunit protein uL15 (RPL28) from Candida albicans (Yeast).